A 623-amino-acid chain; its full sequence is ATP-dependent lipid A-core flippase (623 aa).

A run of 5 helical transmembrane segments spans residues Leu-66 to Ile-86, Val-103 to Phe-123, Leu-190 to Ile-210, Leu-290 to Leu-310, and Ala-317 to Ile-337. Residues Val-67–Lys-349 form the ABC transmembrane type-1 domain. An ABC transporter domain is found at Val-382–Met-618. Gly-416–Thr-423 contacts ATP.

Belongs to the ABC transporter superfamily. Lipid exporter (TC 3.A.1.106) family. Homodimer.

It localises to the cell inner membrane. The enzyme catalyses ATP + H2O + lipid A-core oligosaccharideSide 1 = ADP + phosphate + lipid A-core oligosaccharideSide 2.. Involved in lipopolysaccharide (LPS) biosynthesis. Translocates lipid A-core from the inner to the outer leaflet of the inner membrane. Transmembrane domains (TMD) form a pore in the inner membrane and the ATP-binding domain (NBD) is responsible for energy generation. This Bordetella bronchiseptica (strain ATCC BAA-588 / NCTC 13252 / RB50) (Alcaligenes bronchisepticus) protein is ATP-dependent lipid A-core flippase.